Consider the following 507-residue polypeptide: Histidine ammonia-lyase (507 aa).

Residues 142–144 constitute a cross-link (5-imidazolinone (Ala-Gly)); sequence ASG. Position 143 is a 2,3-didehydroalanine (Ser) (S143).

Belongs to the PAL/histidase family. Post-translationally, contains an active site 4-methylidene-imidazol-5-one (MIO), which is formed autocatalytically by cyclization and dehydration of residues Ala-Ser-Gly.

Its subcellular location is the cytoplasm. It carries out the reaction L-histidine = trans-urocanate + NH4(+). The protein operates within amino-acid degradation; L-histidine degradation into L-glutamate; N-formimidoyl-L-glutamate from L-histidine: step 1/3. This chain is Histidine ammonia-lyase, found in Maricaulis maris (strain MCS10) (Caulobacter maris).